The sequence spans 215 residues: ATP-dependent dethiobiotin synthetase BioD (215 aa).

13–18 lines the ATP pocket; sequence DIGKTV. Thr-17 is a binding site for Mg(2+). The active site involves Lys-38. A substrate-binding site is contributed by Thr-42. ATP is bound by residues Asp-50, 115 to 118, and 175 to 176; these read EGAG and NH. Mg(2+) contacts are provided by Asp-50 and Glu-115.

Belongs to the dethiobiotin synthetase family. In terms of assembly, homodimer. Mg(2+) serves as cofactor.

The protein localises to the cytoplasm. It carries out the reaction (7R,8S)-7,8-diammoniononanoate + CO2 + ATP = (4R,5S)-dethiobiotin + ADP + phosphate + 3 H(+). The protein operates within cofactor biosynthesis; biotin biosynthesis; biotin from 7,8-diaminononanoate: step 1/2. In terms of biological role, catalyzes a mechanistically unusual reaction, the ATP-dependent insertion of CO2 between the N7 and N8 nitrogen atoms of 7,8-diaminopelargonic acid (DAPA, also called 7,8-diammoniononanoate) to form a ureido ring. The sequence is that of ATP-dependent dethiobiotin synthetase BioD from Neisseria meningitidis serogroup C / serotype 2a (strain ATCC 700532 / DSM 15464 / FAM18).